Consider the following 554-residue polypeptide: D-3-phosphoglycerate dehydrogenase (554 aa).

NAD(+)-binding positions include 177 to 178 (KI), Asp-197, 256 to 258 (CSR), and Asp-282. Arg-258 is an active-site residue. The active site involves Glu-287. His-305 functions as the Proton donor in the catalytic mechanism. 305–308 (HLGA) contributes to the NAD(+) binding site. The ACT domain occupies 482 to 554 (MLFTLHRDMP…GIRDAYTVKL (73 aa)).

Belongs to the D-isomer specific 2-hydroxyacid dehydrogenase family.

The catalysed reaction is (2R)-3-phosphoglycerate + NAD(+) = 3-phosphooxypyruvate + NADH + H(+). The enzyme catalyses (R)-2-hydroxyglutarate + NAD(+) = 2-oxoglutarate + NADH + H(+). Its pathway is amino-acid biosynthesis; L-serine biosynthesis; L-serine from 3-phospho-D-glycerate: step 1/3. Catalyzes the reversible oxidation of 3-phospho-D-glycerate to 3-phosphonooxypyruvate, the first step of the phosphorylated L-serine biosynthesis pathway. Also catalyzes the reversible oxidation of 2-hydroxyglutarate to 2-oxoglutarate. The chain is D-3-phosphoglycerate dehydrogenase (serA) from Synechocystis sp. (strain ATCC 27184 / PCC 6803 / Kazusa).